Here is a 461-residue protein sequence, read N- to C-terminus: Polycomb group protein FIE1 (461 aa).

Basic residues predominate over residues 1-11; that stretch reads MPPSKARRKRS. The tract at residues 1 to 56 is disordered; that stretch reads MPPSKARRKRSLRDITATVATGTVANSKPGSSSTNEGKQQDKKKEGPQEPDIPPLP. Residues 18–37 are compositionally biased toward polar residues; that stretch reads TVATGTVANSKPGSSSTNEG. The segment covering 38–47 has biased composition (basic and acidic residues); sequence KQQDKKKEGP. WD repeat units follow at residues 143–186, 189–229, 235–275, 301–338, 351–391, and 398–437; these read DKDE…LDKS, GHGG…CILV, GHRH…IYVE, VHSD…RRPG, PKCS…PVLI, and ECKS…ASSS. The segment at 429-461 is disordered; it reads EVDPAASSSKPDQAAAPAAGVGAGAGADADADA. The span at 432-448 shows a compositional bias: low complexity; it reads PAASSSKPDQAAAPAAG.

Belongs to the WD repeat ESC family. As to expression, specifically expressed in kernel starting from 6 days after pollination.

It localises to the nucleus. Its function is as follows. Polycomb group (PcG) protein. PcG proteins act by forming multiprotein complexes, which are required to maintain the transcriptionally repressive state of homeotic genes throughout development. PcG proteins are not required to initiate repression, but to maintain it during later stages of development. They probably act via the methylation of histones, rendering chromatin heritably changed in its expressibility. The polypeptide is Polycomb group protein FIE1 (FIE1) (Zea mays (Maize)).